Here is a 187-residue protein sequence, read N- to C-terminus: BCL2/adenovirus E1B 19 kDa protein-interacting protein 3 (187 aa).

The disordered stretch occupies residues 42 to 86; that stretch reads LDAQHESGRSSSKSSHCDSPPRSQTPQDTNRAEIDSHSFGEKNST. Residues Ser-48, Ser-60, Ser-77, Ser-79, Ser-85, and Ser-88 each carry the phosphoserine modification. Positions 50 to 63 are enriched in low complexity; that stretch reads RSSSKSSHCDSPPR. The segment covering 71-81 has biased composition (basic and acidic residues); that stretch reads NRAEIDSHSFG. A BH3 motif is present at residues 93–118; it reads IERRREVESILKKNSDWIWDWSSRPE. A helical transmembrane segment spans residues 157 to 177; it reads VFLPSLLLSHLLAIGLGIYIG.

Belongs to the NIP3 family. Homodimer. Binds to BCL2. Interacts with BNIP3L and ACAA2. Interacts (via BH3 domain) with SPATA18 (via coiled-coil domains). Interacts with BOK; promotes BOK oligomerization. Interacts with PPTC7; this interaction promotes BNIP3 degradation.

It is found in the mitochondrion. It localises to the mitochondrion outer membrane. Its function is as follows. Apoptosis-inducing protein that can overcome BCL2 suppression. May play a role in repartitioning calcium between the two major intracellular calcium stores in association with BCL2. Involved in mitochondrial quality control via its interaction with SPATA18/MIEAP: in response to mitochondrial damage, participates in mitochondrial protein catabolic process (also named MALM) leading to the degradation of damaged proteins inside mitochondria. The physical interaction of SPATA18/MIEAP, BNIP3 and BNIP3L/NIX at the mitochondrial outer membrane may play a critical role in the translocation of lysosomal proteins from the cytoplasm to the mitochondrial matrix. The physical interaction of SPATA18/MIEAP, BNIP3 and BNIP3L/NIX at the mitochondrial outer membrane regulates the opening of a pore in the mitochondrial double membrane in order to mediate the translocation of lysosomal proteins from the cytoplasm to the mitochondrial matrix. Plays an important role in the calprotectin (S100A8/A9)-induced cell death pathway. This Mus musculus (Mouse) protein is BCL2/adenovirus E1B 19 kDa protein-interacting protein 3.